We begin with the raw amino-acid sequence, 497 residues long: tRNA-2-methylthio-N(6)-dimethylallyladenosine synthase (497 aa).

Residues 1–50 form a disordered region; the sequence is MTGTSNIPTHGKEHKDAPALLPLPAPNPHHTHAAHPGDPSHDRPPSRGKL. An MTTase N-terminal domain is found at 48–165; sequence GKLFIKTHGC…LPDMIRARRE (118 aa). Residues Cys57, Cys94, Cys128, Cys202, Cys206, and Cys209 each coordinate [4Fe-4S] cluster. One can recognise a Radical SAM core domain in the interval 188-430; it reads RAEGPSAFVS…QKHINAYAAD (243 aa). The region spanning 433–496 is the TRAM domain; that stretch reads KRMIGTVQTV…TNSLRGRVHT (64 aa).

This sequence belongs to the methylthiotransferase family. MiaB subfamily. In terms of assembly, monomer. It depends on [4Fe-4S] cluster as a cofactor.

The protein resides in the cytoplasm. It catalyses the reaction N(6)-dimethylallyladenosine(37) in tRNA + (sulfur carrier)-SH + AH2 + 2 S-adenosyl-L-methionine = 2-methylsulfanyl-N(6)-dimethylallyladenosine(37) in tRNA + (sulfur carrier)-H + 5'-deoxyadenosine + L-methionine + A + S-adenosyl-L-homocysteine + 2 H(+). Its function is as follows. Catalyzes the methylthiolation of N6-(dimethylallyl)adenosine (i(6)A), leading to the formation of 2-methylthio-N6-(dimethylallyl)adenosine (ms(2)i(6)A) at position 37 in tRNAs that read codons beginning with uridine. This chain is tRNA-2-methylthio-N(6)-dimethylallyladenosine synthase, found in Xylella fastidiosa (strain M12).